The primary structure comprises 350 residues: E3 ubiquitin-protein ligase TRIM63 (350 aa).

An RING-type zinc finger spans residues 23–79 (CPICLEMFTKPVVILPCQHNLCRKCANDIFQAANPYWTNRGGSVSMSGGRFRCPSCR). The interaction with TTN stretch occupies residues 74–218 (RCPSCRHEVI…LSQKFDTLYA (145 aa)). The B box-type zinc-finger motif lies at 117–159 (GSHPMCKEHEDEKINIYCLTCEVPTCSLCKVFGAHQACEVAPL). Cys-122, His-125, Cys-145, and His-151 together coordinate Zn(2+). A coiled-coil region spans residues 207–269 (EELSQKFDTL…VETAIQSLDE (63 aa)). A COS domain is found at 267 to 325 (LDEPGGATFLSSAKQLIKSNVEASKGCQLGKTEQGFENMDYFTLDLEHIAEALRAIDFG). A compositionally biased stretch (acidic residues) spans 325 to 344 (GTDEEEEEFTEEEADEEEGV). The tract at residues 325–350 (GTDEEEEEFTEEEADEEEGVTTEGHQ) is disordered.

Homodimer. Homooligomer and heterooligomer. Interacts with SUMO2, titin/TTN and GMEB1. Interacts with TRIM54 and probably with TRIM55. Interacts with TNNI3. Forms a ternary complex with RACK1 and PRKCE. Interacts with CKM.

It is found in the cytoplasm. Its subcellular location is the nucleus. It localises to the myofibril. The protein resides in the sarcomere. The protein localises to the m line. It is found in the z line. The catalysed reaction is S-ubiquitinyl-[E2 ubiquitin-conjugating enzyme]-L-cysteine + [acceptor protein]-L-lysine = [E2 ubiquitin-conjugating enzyme]-L-cysteine + N(6)-ubiquitinyl-[acceptor protein]-L-lysine.. It participates in protein modification; protein ubiquitination. In terms of biological role, E3 ubiquitin ligase. Mediates the ubiquitination and subsequent proteasomal degradation of CKM, GMEB1 and HIBADH. Regulates the proteasomal degradation of muscle proteins under amino acid starvation, where muscle protein is catabolized to provide other organs with amino acids. Inhibits de novo skeletal muscle protein synthesis under amino acid starvation. Regulates proteasomal degradation of cardiac troponin I/TNNI3 and probably of other sarcomeric-associated proteins. May play a role in striated muscle atrophy and hypertrophy by regulating an anti-hypertrophic PKC-mediated signaling pathway. May regulate the organization of myofibrils through TTN in muscle cells. The polypeptide is E3 ubiquitin-protein ligase TRIM63 (Trim63) (Mus musculus (Mouse)).